Consider the following 269-residue polypeptide: Bis(5'-nucleosyl)-tetraphosphatase, symmetrical (269 aa).

It belongs to the Ap4A hydrolase family.

The catalysed reaction is P(1),P(4)-bis(5'-adenosyl) tetraphosphate + H2O = 2 ADP + 2 H(+). In terms of biological role, hydrolyzes diadenosine 5',5'''-P1,P4-tetraphosphate to yield ADP. The chain is Bis(5'-nucleosyl)-tetraphosphatase, symmetrical from Vibrio vulnificus (strain CMCP6).